The chain runs to 501 residues: Glycerol kinase 1 (501 aa).

Thr16 is a binding site for ADP. ATP is bound by residues Thr16, Thr17, and Ser18. Thr16 serves as a coordination point for sn-glycerol 3-phosphate. ADP is bound at residue Arg20. Positions 84, 85, 135, and 242 each coordinate sn-glycerol 3-phosphate. The glycerol site is built by Arg84, Glu85, Tyr135, Asp242, and Gln243. The ADP site is built by Thr264 and Gly307. Positions 264, 307, 311, and 408 each coordinate ATP. Residue Gly408 coordinates ADP.

It belongs to the FGGY kinase family.

The enzyme catalyses glycerol + ATP = sn-glycerol 3-phosphate + ADP + H(+). It functions in the pathway polyol metabolism; glycerol degradation via glycerol kinase pathway; sn-glycerol 3-phosphate from glycerol: step 1/1. Its function is as follows. Key enzyme in the regulation of glycerol uptake and metabolism. Catalyzes the phosphorylation of glycerol to yield sn-glycerol 3-phosphate. This Saccharolobus solfataricus (strain ATCC 35092 / DSM 1617 / JCM 11322 / P2) (Sulfolobus solfataricus) protein is Glycerol kinase 1.